A 569-amino-acid chain; its full sequence is Beta-galactoside-specific lectin 3 (569 aa).

An N-terminal signal peptide occupies residues 1 to 33; it reads MNAVMDSRGAWVSCFLILGLVFGATVKAETKFS. Glutamate 198 is an active-site residue. Disulfide bonds link cysteine 280–cysteine 311, cysteine 327–cysteine 346, and cysteine 370–cysteine 387. The propeptide at 288 to 307 is connecting peptide; the sequence is EVRYWPLVIRPVLENSGAVD. Residues 314-441 enclose the Ricin B-type lectin 1 domain; sequence SEPTVRIVGR…YSLGQGWLAG (128 aa). Residue 329–331 coordinates D-galactose; it reads DVR. Residues asparagine 402 and asparagine 442 are each glycosylated (N-linked (GlcNAc...) asparagine). Residues 445 to 568 enclose the Ricin B-type lectin 2 domain; that stretch reads APREVTIYGF…GNPNQMWLPV (124 aa). Cystine bridges form between cysteine 458–cysteine 471 and cysteine 497–cysteine 514. 541–543 provides a ligand contact to D-galactose; it reads DVA.

Belongs to the ribosome-inactivating protein family. Type 2 RIP subfamily. Disulfide-linked dimer of A and B chains.

The enzyme catalyses Endohydrolysis of the N-glycosidic bond at one specific adenosine on the 28S rRNA.. Functionally, the A chain is responsible for inhibiting protein synthesis through the catalytic inactivation of 60S ribosomal subunits by removing adenine from position 4,324 of 28S rRNA. The B chain binds to cell receptors and probably facilitates the entry into the cell of the A chain; B chains are also responsible for cell agglutination (lectin activity). Inhibits growth of the human tumor cell line Molt4. This is Beta-galactoside-specific lectin 3 from Viscum album (European mistletoe).